Here is a 257-residue protein sequence, read N- to C-terminus: Capsid protein (257 aa).

Belongs to the geminiviridae capsid protein family.

The protein resides in the virion. Functionally, encapsidates the viral DNA into characteristic twinned ('geminate') particles. Plays a role in protection of the genome from degradation, virus acquisition and transmission by insect vectors, infectivity, and systemic movement. The protein is Capsid protein of Capsicum annuum (Capsicum pepper).